A 503-amino-acid polypeptide reads, in one-letter code: WD repeat-containing protein 55 homolog (503 aa).

The segment at 1–131 is disordered; it reads MHTHNNFKTP…DSAAFDLDDL (131 aa). 2 stretches are compositionally biased toward acidic residues: residues 12-23 and 37-56; these read DADELDDLDDDM and VGEDESDSDIDEHDLADMEA. The segment covering 59–76 has biased composition (polar residues); the sequence is PNQNADENESISSDSSFD. The segment covering 78–96 has biased composition (acidic residues); sequence NAEDSSDSDDSMLEEDEAE. 6 WD repeats span residues 157–196, 201–242, 244–282, 285–324, 327–366, and 411–450; these read KLEDFITDVCFHPDRDIIALATIIGDVHLYEYGNEGNKLL, VHSK…KLYE, AHDDAINKLHVLDENLFATGDDAGTVKLWDLRTKNPIFE, EVEDQITQMITNDQKKLLLATSADGYLTTFNIAARKLYVQ, PYEEELNCMGIYRGSSKLVVGTSKGKLYSYNWGYFGYHCD, and QHNMPIESLDINTSGELLASSSHNNDVRFWNVKYFEDFGD. The disordered stretch occupies residues 483-503; sequence TKEDEDNADNNDAAAGPSNSA.

It belongs to the WD repeat WDR55 family.

The sequence is that of WD repeat-containing protein 55 homolog from Drosophila pseudoobscura pseudoobscura (Fruit fly).